A 289-amino-acid chain; its full sequence is Urease accessory protein UreD (289 aa).

It belongs to the UreD family. As to quaternary structure, ureD, UreF and UreG form a complex that acts as a GTP-hydrolysis-dependent molecular chaperone, activating the urease apoprotein by helping to assemble the nickel containing metallocenter of UreC. The UreE protein probably delivers the nickel.

It is found in the cytoplasm. Its function is as follows. Required for maturation of urease via the functional incorporation of the urease nickel metallocenter. The protein is Urease accessory protein UreD of Xanthobacter autotrophicus (strain ATCC BAA-1158 / Py2).